The sequence spans 337 residues: Ribosomal RNA small subunit methyltransferase H (337 aa).

Residues 45–47, Asp-64, His-91, Asp-112, and Gln-119 contribute to the S-adenosyl-L-methionine site; that span reads GGH.

It belongs to the methyltransferase superfamily. RsmH family.

The protein resides in the cytoplasm. It catalyses the reaction cytidine(1402) in 16S rRNA + S-adenosyl-L-methionine = N(4)-methylcytidine(1402) in 16S rRNA + S-adenosyl-L-homocysteine + H(+). Specifically methylates the N4 position of cytidine in position 1402 (C1402) of 16S rRNA. This Cutibacterium acnes (strain DSM 16379 / KPA171202) (Propionibacterium acnes) protein is Ribosomal RNA small subunit methyltransferase H.